A 174-amino-acid chain; its full sequence is Probable E3 ubiquitin-protein ligase RHA4A (174 aa).

The RING-type; atypical zinc finger occupies 105-147 (CCVCLGEFELKEELVEMPLCKHIFHLDCIHLWLYSHNTCPLCR). Positions 155–174 (TKTSVDDDNDHPDSPQTSPV) are disordered.

In terms of tissue distribution, expressed in stems, flowers, cauline leaves and roots.

The enzyme catalyses S-ubiquitinyl-[E2 ubiquitin-conjugating enzyme]-L-cysteine + [acceptor protein]-L-lysine = [E2 ubiquitin-conjugating enzyme]-L-cysteine + N(6)-ubiquitinyl-[acceptor protein]-L-lysine.. Its pathway is protein modification; protein ubiquitination. Its function is as follows. Probable E3 ubiquitin-protein ligase that may possess E3 ubiquitin ligase activity in vitro. The polypeptide is Probable E3 ubiquitin-protein ligase RHA4A (Arabidopsis thaliana (Mouse-ear cress)).